We begin with the raw amino-acid sequence, 355 residues long: Proto-oncogene Wnt-3 (355 aa).

An N-terminal signal peptide occupies residues 1-21 (MEPHLLGLLLGLLLGGTRVLA). Intrachain disulfides connect C80/C91, C131/C139, C141/C158, C206/C220, C208/C215, C284/C315, C300/C310, C314/C354, C330/C345, C332/C342, and C337/C338. Residue N90 is glycosylated (N-linked (GlcNAc...) asparagine). S212 carries O-palmitoleoyl serine; by PORCN lipidation. N-linked (GlcNAc...) asparagine glycosylation is present at N301.

It belongs to the Wnt family. As to quaternary structure, forms a soluble 1:1 complex with AFM; this prevents oligomerization and is required for prolonged biological activity. The complex with AFM may represent the physiological form in body fluids. Interacts with PORCN. Interacts with WLS. Palmitoleoylation is required for efficient binding to frizzled receptors. Depalmitoleoylation leads to Wnt signaling pathway inhibition.

The protein resides in the secreted. Its subcellular location is the extracellular space. The protein localises to the extracellular matrix. Ligand for members of the frizzled family of seven transmembrane receptors. Functions in the canonical Wnt signaling pathway that results in activation of transcription factors of the TCF/LEF family. Required for normal gastrulation, formation of the primitive streak, and for the formation of the mesoderm during early embryogenesis. Required for normal formation of the apical ectodermal ridge. Required for normal embryonic development, and especially for limb development. In Homo sapiens (Human), this protein is Proto-oncogene Wnt-3 (WNT3).